The primary structure comprises 542 residues: CTP synthase (542 aa).

Residues Met1–Leu265 form an amidoligase domain region. Ser13 contributes to the CTP binding site. Ser13 provides a ligand contact to UTP. ATP is bound by residues Ser14 to Ile19 and Asp71. Mg(2+) is bound by residues Asp71 and Glu139. CTP is bound by residues Asp146–Glu148, Lys186–Gln191, and Lys222. UTP is bound by residues Lys186–Gln191 and Lys222. Residues Thr290–Gly541 form the Glutamine amidotransferase type-1 domain. L-glutamine is bound at residue Gly351. The Nucleophile; for glutamine hydrolysis role is filled by Cys378. Residues Leu379 to Gln382, Glu402, and Arg469 contribute to the L-glutamine site. Residues His514 and Glu516 contribute to the active site.

Belongs to the CTP synthase family. As to quaternary structure, homotetramer.

It catalyses the reaction UTP + L-glutamine + ATP + H2O = CTP + L-glutamate + ADP + phosphate + 2 H(+). It carries out the reaction L-glutamine + H2O = L-glutamate + NH4(+). The catalysed reaction is UTP + NH4(+) + ATP = CTP + ADP + phosphate + 2 H(+). The protein operates within pyrimidine metabolism; CTP biosynthesis via de novo pathway; CTP from UDP: step 2/2. With respect to regulation, allosterically activated by GTP, when glutamine is the substrate; GTP has no effect on the reaction when ammonia is the substrate. The allosteric effector GTP functions by stabilizing the protein conformation that binds the tetrahedral intermediate(s) formed during glutamine hydrolysis. Inhibited by the product CTP, via allosteric rather than competitive inhibition. In terms of biological role, catalyzes the ATP-dependent amination of UTP to CTP with either L-glutamine or ammonia as the source of nitrogen. Regulates intracellular CTP levels through interactions with the four ribonucleotide triphosphates. In Marinobacter nauticus (strain ATCC 700491 / DSM 11845 / VT8) (Marinobacter aquaeolei), this protein is CTP synthase.